Consider the following 65-residue polypeptide: Large ribosomal subunit protein bL35 (65 aa).

Residues 1 to 10 show a composition bias toward basic residues; that stretch reads MPKMKSKSSA. The segment at 1-21 is disordered; sequence MPKMKSKSSAKMRFSVRAGGT.

It belongs to the bacterial ribosomal protein bL35 family.

In Polynucleobacter necessarius subsp. necessarius (strain STIR1), this protein is Large ribosomal subunit protein bL35.